The chain runs to 188 residues: uncharacterized protein (188 aa).

This is an uncharacterized protein from Homo sapiens (Human).